A 447-amino-acid chain; its full sequence is Phosphoglucosamine mutase (447 aa).

The active-site Phosphoserine intermediate is Ser-100. Mg(2+) is bound by residues Ser-100, Asp-239, Asp-241, and Asp-243. Ser-100 is subject to Phosphoserine.

Belongs to the phosphohexose mutase family. Requires Mg(2+) as cofactor. Post-translationally, activated by phosphorylation.

The catalysed reaction is alpha-D-glucosamine 1-phosphate = D-glucosamine 6-phosphate. Catalyzes the conversion of glucosamine-6-phosphate to glucosamine-1-phosphate. This chain is Phosphoglucosamine mutase, found in Halalkalibacterium halodurans (strain ATCC BAA-125 / DSM 18197 / FERM 7344 / JCM 9153 / C-125) (Bacillus halodurans).